The following is a 389-amino-acid chain: Flavin-dependent monooxygenase (389 aa).

Residues 12–15, 34–35, Gln-44, Arg-105, Tyr-267, and Asp-289 contribute to the FAD site; these read AGVA and EK.

This sequence belongs to the aromatic-ring hydroxylase family. FAD is required as a cofactor.

It catalyses the reaction a tetracycline + NADPH + O2 + H(+) = a (1S,10aS)-3-(CONH2)-1-(Me2N)-3,3a,4,6-(HO)4-2,5-dioxo-1H,10aH,11H,11aH-cyclopenta[b]anthracene + CO + NADP(+) + H2O. The enzyme catalyses 7-chlorotetracycline + NADPH + O2 + H(+) = (1S,10S,10aS)-3-(CONH2)-9-Cl-1-(Me2N)-3,3a,4,10-(HO)4-10-Me-2,5-dioxo-1H,10aH,11H,11aH-cyclopenta[b]anthracen-6-olate + CO + NADP(+) + H2O. With respect to regulation, inhibited by anhydrotetracycline. Functionally, an FAD-requiring monooxygenase active on tetracycline antibiotic and some of its derivatives, which leads to their inactivation. Expression in E.coli confers high resistance to tetracycline and oxytetracycline, does not confer resistance to minocycline or tigecycline. The reaction requires NADPH. Expression in L.pneumophila confers resistance to tetracycline. Degrades and confers resistance to tetracycline and chlortetracycline. This is Flavin-dependent monooxygenase (tet(56)) from Legionella longbeachae serogroup 1 (strain NSW150).